Reading from the N-terminus, the 87-residue chain is Phosphoribosyl-ATP pyrophosphatase (87 aa).

The protein belongs to the PRA-PH family.

It localises to the cytoplasm. It catalyses the reaction 1-(5-phospho-beta-D-ribosyl)-ATP + H2O = 1-(5-phospho-beta-D-ribosyl)-5'-AMP + diphosphate + H(+). Its pathway is amino-acid biosynthesis; L-histidine biosynthesis; L-histidine from 5-phospho-alpha-D-ribose 1-diphosphate: step 2/9. This chain is Phosphoribosyl-ATP pyrophosphatase, found in Corynebacterium diphtheriae (strain ATCC 700971 / NCTC 13129 / Biotype gravis).